A 222-amino-acid chain; its full sequence is ATP synthase F(0) complex subunit a (222 aa).

6 helical membrane-spanning segments follow: residues 7 to 27, 64 to 84, 93 to 113, 132 to 152, 160 to 180, and 197 to 219; these read AFFD…AILL, WSLM…LGLL, QLTV…VLGF, FLIP…PITL, ITAG…LLSV, and ILEL…LYLH.

This sequence belongs to the ATPase A chain family. As to quaternary structure, component of the ATP synthase complex composed at least of ATP5F1A/subunit alpha, ATP5F1B/subunit beta, ATP5MC1/subunit c (homooctomer), MT-ATP6/subunit a, MT-ATP8/subunit 8, ATP5ME/subunit e, ATP5MF/subunit f, ATP5MG/subunit g, ATP5MK/subunit k, ATP5MJ/subunit j, ATP5F1C/subunit gamma, ATP5F1D/subunit delta, ATP5F1E/subunit epsilon, ATP5PF/subunit F6, ATP5PB/subunit b, ATP5PD/subunit d, ATP5PO/subunit OSCP. ATP synthase complex consists of a soluble F(1) head domain (subunits alpha(3) and beta(3)) - the catalytic core - and a membrane F(0) domain - the membrane proton channel (subunits c, a, 8, e, f, g, k and j). These two domains are linked by a central stalk (subunits gamma, delta, and epsilon) rotating inside the F1 region and a stationary peripheral stalk (subunits F6, b, d, and OSCP). Interacts with DNAJC30; interaction is direct.

It localises to the mitochondrion inner membrane. It carries out the reaction H(+)(in) = H(+)(out). Functionally, subunit a, of the mitochondrial membrane ATP synthase complex (F(1)F(0) ATP synthase or Complex V) that produces ATP from ADP in the presence of a proton gradient across the membrane which is generated by electron transport complexes of the respiratory chain. ATP synthase complex consist of a soluble F(1) head domain - the catalytic core - and a membrane F(1) domain - the membrane proton channel. These two domains are linked by a central stalk rotating inside the F(1) region and a stationary peripheral stalk. During catalysis, ATP synthesis in the catalytic domain of F(1) is coupled via a rotary mechanism of the central stalk subunits to proton translocation. With the subunit c (ATP5MC1), forms the proton-conducting channel in the F(0) domain, that contains two crucial half-channels (inlet and outlet) that facilitate proton movement from the mitochondrial intermembrane space (IMS) into the matrix. Protons are taken up via the inlet half-channel and released through the outlet half-channel, following a Grotthuss mechanism. The chain is ATP synthase F(0) complex subunit a from Elephas maximus (Indian elephant).